We begin with the raw amino-acid sequence, 289 residues long: Acetyl-coenzyme A carboxylase carboxyl transferase subunit beta (289 aa).

Positions 24–289 (LWTNCESCGQ…RQKTVSDAAA (266 aa)) constitute a CoA carboxyltransferase N-terminal domain. The Zn(2+) site is built by Cys-28, Cys-31, Cys-47, and Cys-50. The C4-type zinc finger occupies 28–50 (CESCGQMMLTKELERSEKVCPHC).

The protein belongs to the AccD/PCCB family. Acetyl-CoA carboxylase is a heterohexamer composed of biotin carboxyl carrier protein (AccB), biotin carboxylase (AccC) and two subunits each of ACCase subunit alpha (AccA) and ACCase subunit beta (AccD). Zn(2+) serves as cofactor.

It localises to the cytoplasm. It catalyses the reaction N(6)-carboxybiotinyl-L-lysyl-[protein] + acetyl-CoA = N(6)-biotinyl-L-lysyl-[protein] + malonyl-CoA. It functions in the pathway lipid metabolism; malonyl-CoA biosynthesis; malonyl-CoA from acetyl-CoA: step 1/1. Its function is as follows. Component of the acetyl coenzyme A carboxylase (ACC) complex. Biotin carboxylase (BC) catalyzes the carboxylation of biotin on its carrier protein (BCCP) and then the CO(2) group is transferred by the transcarboxylase to acetyl-CoA to form malonyl-CoA. This is Acetyl-coenzyme A carboxylase carboxyl transferase subunit beta from Gluconobacter oxydans (strain 621H) (Gluconobacter suboxydans).